The following is a 475-amino-acid chain: Ribulose bisphosphate carboxylase large chain (475 aa).

Positions 1–2 (MS) are excised as a propeptide. The residue at position 3 (P3) is an N-acetylproline. K14 is modified (N6,N6,N6-trimethyllysine). Residues N123 and T173 each contribute to the substrate site. K175 serves as the catalytic Proton acceptor. K177 is a substrate binding site. Residues K201, D203, and E204 each contribute to the Mg(2+) site. K201 is subject to N6-carboxylysine. The active-site Proton acceptor is H294. Residues R295, H327, and S379 each contribute to the substrate site.

This sequence belongs to the RuBisCO large chain family. Type I subfamily. Heterohexadecamer of 8 large chains and 8 small chains; disulfide-linked. The disulfide link is formed within the large subunit homodimers. It depends on Mg(2+) as a cofactor. The disulfide bond which can form in the large chain dimeric partners within the hexadecamer appears to be associated with oxidative stress and protein turnover.

Its subcellular location is the plastid. The protein resides in the chloroplast. It carries out the reaction 2 (2R)-3-phosphoglycerate + 2 H(+) = D-ribulose 1,5-bisphosphate + CO2 + H2O. The catalysed reaction is D-ribulose 1,5-bisphosphate + O2 = 2-phosphoglycolate + (2R)-3-phosphoglycerate + 2 H(+). Functionally, ruBisCO catalyzes two reactions: the carboxylation of D-ribulose 1,5-bisphosphate, the primary event in carbon dioxide fixation, as well as the oxidative fragmentation of the pentose substrate in the photorespiration process. Both reactions occur simultaneously and in competition at the same active site. This Larix occidentalis (Western larch) protein is Ribulose bisphosphate carboxylase large chain.